The sequence spans 179 residues: Putative cleavage and polyadenylation specificity factor subunit 4-like protein (179 aa).

5 consecutive C3H1-type zinc fingers follow at residues 35–61, 62–89, 90–117, 118–145, and 146–169; these read KSAS…RHDR, GEKM…HQYD, LTRM…HVKP, AFKS…HVPR, and IMCL…QKIR.

Belongs to the CPSF4/YTH1 family.

The chain is Putative cleavage and polyadenylation specificity factor subunit 4-like protein (CPSF4L) from Homo sapiens (Human).